Reading from the N-terminus, the 148-residue chain is 3-hydroxyacyl-[acyl-carrier-protein] dehydratase FabZ (148 aa).

H55 is a catalytic residue.

The protein belongs to the thioester dehydratase family. FabZ subfamily.

The protein localises to the cytoplasm. It catalyses the reaction a (3R)-hydroxyacyl-[ACP] = a (2E)-enoyl-[ACP] + H2O. Functionally, involved in unsaturated fatty acids biosynthesis. Catalyzes the dehydration of short chain beta-hydroxyacyl-ACPs and long chain saturated and unsaturated beta-hydroxyacyl-ACPs. This chain is 3-hydroxyacyl-[acyl-carrier-protein] dehydratase FabZ, found in Haemophilus influenzae (strain 86-028NP).